Here is a 285-residue protein sequence, read N- to C-terminus: Small ribosomal subunit protein uS2 (285 aa).

The segment at 262-285 (NDDWNEDDTAPAAPGAASWGGAAF) is disordered. Positions 271-285 (APAAPGAASWGGAAF) are enriched in low complexity.

This sequence belongs to the universal ribosomal protein uS2 family. As to quaternary structure, component of the small ribosomal subunit. Mature ribosomes consist of a small (40S) and a large (60S) subunit. The 40S subunit contains about 33 different proteins and 1 molecule of RNA (18S). The 60S subunit contains about 49 different proteins and 3 molecules of RNA (28S, 5.8S and 5S). Interacts with ribosomal protein S21.

It is found in the cytoplasm. In terms of biological role, required for the assembly and/or stability of the 40S ribosomal subunit. Required for the processing of the 20S rRNA-precursor to mature 18S rRNA in a late step of the maturation of 40S ribosomal subunits. The chain is Small ribosomal subunit protein uS2 from Anopheles gambiae (African malaria mosquito).